Here is a 276-residue protein sequence, read N- to C-terminus: Large ribosomal subunit protein uL2 (276 aa).

Residues 212-276 (NRHRGIRPQT…KLIISRKKHK (65 aa)) form a disordered region. The segment covering 257–276 (YKTRKKKASDKLIISRKKHK) has biased composition (basic residues).

The protein belongs to the universal ribosomal protein uL2 family. In terms of assembly, part of the 50S ribosomal subunit. Forms a bridge to the 30S subunit in the 70S ribosome.

In terms of biological role, one of the primary rRNA binding proteins. Required for association of the 30S and 50S subunits to form the 70S ribosome, for tRNA binding and peptide bond formation. It has been suggested to have peptidyltransferase activity; this is somewhat controversial. Makes several contacts with the 16S rRNA in the 70S ribosome. This Helicobacter pylori (strain P12) protein is Large ribosomal subunit protein uL2.